The following is a 320-amino-acid chain: Apolipoprotein E (320 aa).

The signal sequence occupies residues 1–18 (MKVLWAAFLVAFLAGCQG). 8 tandem repeats follow at residues 82–103 (ALMDETMKELKAYKSELEEQLS), 104–125 (PVAEETRARLSKELQAAQARLG), 126–147 (ADMEDVRSRLAQYRSEVQAMLG), 148–169 (QSTDELRARLASHLRKLRKRLL), 170–191 (RDVDDLQKRLAVYQAGAREGAE), 192–213 (RGVSAIRERLGPLVEQGRARAA), 214–236 (TVGSSLASQPLQERAQAWGERLR), and 237–258 (ARMEEVGSRTRDRLDEVKEQVE). The interval 82 to 199 (ALMDETMKEL…AERGVSAIRE (118 aa)) is 8 X 22 AA approximate tandem repeats. Met-145 is modified (methionine sulfoxide). Ser-149 carries the phosphoserine modification. Residues 160–170 (HLRKLRKRLLR) are LDL and other lipoprotein receptors binding. A heparin-binding site is contributed by 164 to 167 (LRKR). Residues 212–293 (AATVGSSLAS…SWFEPLVEDM (82 aa)) form a lipid-binding and lipoprotein association region. Heparin is bound at residue 232 to 239 (GERLRARM). Residues 269 to 320 (QQMRLQAEAFQARLKSWFEPLVEDMQRQWAGLVEKVQAAVGASATPVPSDNH) are homooligomerization. A specificity for association with VLDL region spans residues 281–293 (RLKSWFEPLVEDM).

This sequence belongs to the apolipoprotein A1/A4/E family. As to quaternary structure, homotetramer. May interact with ABCA1; functionally associated with ABCA1 in the biogenesis of HDLs. May interact with APP/A4 amyloid-beta peptide; the interaction is extremely stable in vitro but its physiological significance is unclear. May interact with MAPT. May interact with MAP2. In the cerebrospinal fluid, interacts with secreted SORL1. Interacts with PMEL; this allows the loading of PMEL luminal fragment on ILVs to induce fibril nucleation. In terms of processing, APOE exists as multiple glycosylated and sialylated glycoforms within cells and in plasma. The extent of glycosylation and sialylation are tissue and context specific. Post-translationally, glycated in plasma VLDL. Phosphorylated by FAM20C in the extracellular medium.

The protein resides in the secreted. The protein localises to the extracellular space. It localises to the extracellular matrix. It is found in the extracellular vesicle. Its subcellular location is the endosome. The protein resides in the multivesicular body. In terms of biological role, APOE is an apolipoprotein, a protein associating with lipid particles, that mainly functions in lipoprotein-mediated lipid transport between organs via the plasma and interstitial fluids. APOE is a core component of plasma lipoproteins and is involved in their production, conversion and clearance. Apolipoproteins are amphipathic molecules that interact both with lipids of the lipoprotein particle core and the aqueous environment of the plasma. As such, APOE associates with chylomicrons, chylomicron remnants, very low density lipoproteins (VLDL) and intermediate density lipoproteins (IDL) but shows a preferential binding to high-density lipoproteins (HDL). It also binds a wide range of cellular receptors including the LDL receptor/LDLR, the LDL receptor-related proteins LRP1, LRP2 and LRP8 and the very low-density lipoprotein receptor/VLDLR that mediate the cellular uptake of the APOE-containing lipoprotein particles. Finally, APOE also has a heparin-binding activity and binds heparan-sulfate proteoglycans on the surface of cells, a property that supports the capture and the receptor-mediated uptake of APOE-containing lipoproteins by cells. A main function of APOE is to mediate lipoprotein clearance through the uptake of chylomicrons, VLDLs, and HDLs by hepatocytes. APOE is also involved in the biosynthesis by the liver of VLDLs as well as their uptake by peripheral tissues ensuring the delivery of triglycerides and energy storage in muscle, heart and adipose tissues. By participating in the lipoprotein-mediated distribution of lipids among tissues, APOE plays a critical role in plasma and tissues lipid homeostasis. APOE is also involved in two steps of reverse cholesterol transport, the HDLs-mediated transport of cholesterol from peripheral tissues to the liver, and thereby plays an important role in cholesterol homeostasis. First, it is functionally associated with ABCA1 in the biogenesis of HDLs in tissues. Second, it is enriched in circulating HDLs and mediates their uptake by hepatocytes. APOE also plays an important role in lipid transport in the central nervous system, regulating neuron survival and sprouting. The chain is Apolipoprotein E (APOE) from Saimiri boliviensis boliviensis (Bolivian squirrel monkey).